A 128-amino-acid chain; its full sequence is Probable 4-amino-4-deoxy-L-arabinose-phosphoundecaprenol flippase subunit ArnF (128 aa).

The Cytoplasmic segment spans residues 1–2 (MG). A helical membrane pass occupies residues 3–23 (LMWGLFSVIIASAAQLSLGFA). Residues 24–35 (ASHLPPMTHLWD) are Periplasmic-facing. The chain crosses the membrane as a helical span at residues 36–56 (FIAALLAFGLDARILLLGLLG). Topologically, residues 57-76 (YLLSVFCWYKTLHKLALSKA) are cytoplasmic. The chain crosses the membrane as a helical span at residues 77 to 97 (YALLSMSYVLVWIASMVLPGW). The Periplasmic portion of the chain corresponds to 98-100 (EGT). A helical transmembrane segment spans residues 101–121 (FSLKALLGVACIMSGLMLIFL). At 122-128 (PTTKQRY) the chain is on the cytoplasmic side.

The protein belongs to the ArnF family. In terms of assembly, heterodimer of ArnE and ArnF.

Its subcellular location is the cell inner membrane. It functions in the pathway bacterial outer membrane biogenesis; lipopolysaccharide biosynthesis. Functionally, translocates 4-amino-4-deoxy-L-arabinose-phosphoundecaprenol (alpha-L-Ara4N-phosphoundecaprenol) from the cytoplasmic to the periplasmic side of the inner membrane. The protein is Probable 4-amino-4-deoxy-L-arabinose-phosphoundecaprenol flippase subunit ArnF of Escherichia coli O127:H6 (strain E2348/69 / EPEC).